A 630-amino-acid polypeptide reads, in one-letter code: WD repeat-containing protein 26 homolog (630 aa).

Positions Met-1–Ser-13 are enriched in low complexity. The tract at residues Met-1–Gly-90 is disordered. Residues Ser-36 and Ser-40 each carry the phosphoserine modification. Composition is skewed to polar residues over residues Pro-48–Gly-57 and Ile-66–Arg-75. The 33-residue stretch at Ser-96–Leu-128 folds into the LisH domain. Residues Glu-129–Asp-190 enclose the CTLH domain. WD repeat units follow at residues Asp-312–Lys-351, Gln-359–Lys-400, Ser-404–Trp-443, Gly-445–Asp-482, Arg-485–Arg-524, Arg-529–Lys-569, and Gly-572–Thr-612. The disordered stretch occupies residues Pro-604–Thr-630. Residues Ser-609 to Thr-630 are compositionally biased toward low complexity.

The protein resides in the cytoplasm. Its subcellular location is the mitochondrion. In terms of biological role, G-beta-like protein involved in cell signal transduction. The sequence is that of WD repeat-containing protein 26 homolog from Drosophila melanogaster (Fruit fly).